The chain runs to 162 residues: Phospholipase A2 (162 aa).

The signal sequence occupies residues 1–22; it reads MKVLQMFFCVILLCVTSVLVEA. The propeptide occupies 23–35; sequence KSTTKGDETASKR. Cystine bridges form between Cys-60–Cys-155, Cys-62–Cys-78, Cys-77–Cys-134, Cys-84–Cys-127, Cys-94–Cys-120, and Cys-113–Cys-125. Ca(2+) is bound by residues Tyr-61, Gly-63, and Gly-65. His-81 is a catalytic residue. Residue Asp-82 participates in Ca(2+) binding. Residue Asp-128 is part of the active site.

Belongs to the phospholipase A2 family. Group I subfamily. D49 sub-subfamily. It depends on Ca(2+) as a cofactor. As to expression, expressed both outside and in acontia, a specialised envenomation structure laden with batteries of venom-containing nematocysts found only in the superfamily Metridioidea.

It is found in the secreted. The protein resides in the nematocyst. It catalyses the reaction a 1,2-diacyl-sn-glycero-3-phosphocholine + H2O = a 1-acyl-sn-glycero-3-phosphocholine + a fatty acid + H(+). Its function is as follows. PLA2 catalyzes the calcium-dependent hydrolysis of the 2-acyl groups in 3-sn-phosphoglycerides. The polypeptide is Phospholipase A2 (Calliactis polypus (Hermit crab anemone)).